A 231-amino-acid chain; its full sequence is uncharacterized protein (231 aa).

The N-terminal stretch at 1–17 (MFGKILTTSLLIAMTFA) is a signal peptide. A disordered region spans residues 197–231 (KARKQQKNEGDDEETEDEQKIGSAIDGWVERQAKL).

This is an uncharacterized protein from Caenorhabditis elegans.